The following is a 752-amino-acid chain: GTPase-activating protein rrc-1 (752 aa).

Positions 165–244 (PAIAAAVVTK…PRDCVMLIDD (80 aa)) constitute an SH3 domain. One can recognise a Rho-GAP domain in the interval 281 to 463 (LELTELFMRT…FCIENSDSLF (183 aa)). Disordered regions lie at residues 523-552 (STGELCGSPPSEVKWRSRSTRSHSTDATFQ) and 582-609 (RSMRPTSRPPPSPRTRRARFSNGGGANN).

Functions as a GTPase-activating protein (GAP) for ced-10/RAC-1 and CDC42. In Caenorhabditis briggsae, this protein is GTPase-activating protein rrc-1.